Consider the following 446-residue polypeptide: Oxysterols receptor LXR-beta (446 aa).

The segment at 1–69 is disordered; it reads MSSPTSSLDT…PERKRKKGPA (69 aa). The segment at 1–76 is transactivation AF-1; required for ligand-independent transactivation function; it reads MSSPTSSLDT…GPAPKMLGHE (76 aa). Over residues 17–28 the composition is skewed to low complexity; it reads SPQPSTSATSPT. The nuclear receptor DNA-binding region spans 75–152; that stretch reads HELCRVCGDK…AGMREQCVLS (78 aa). 2 NR C4-type zinc fingers span residues 78 to 98 and 116 to 140; these read CRVC…CEGC and CRGS…LRKC. A disordered region spans residues 159 to 201; it reads KRIQKQQQQQPPPPSEPAASSSGRPAASPGTSEASSQGSGEGE. The segment covering 175-196 has biased composition (low complexity); the sequence is PAASSSGRPAASPGTSEASSQG. Positions 205–446 are transactivation AF-2; required for ligand-dependent transactivation function; mediates interaction with CCAR2; sequence LTAAQELMIQ…LLSEIWDVHE (242 aa). The 239-residue stretch at 208–446 folds into the NR LBD domain; it reads AQELMIQQLV…LLSEIWDVHE (239 aa). Glycyl lysine isopeptide (Lys-Gly) (interchain with G-Cter in SUMO2) cross-links involve residues Lys-395 and Lys-433.

Belongs to the nuclear hormone receptor family. NR1 subfamily. As to quaternary structure, forms a heterodimer with RXR. Interacts with CCAR2 (via N-terminus) in a ligand-independent manner. Interacts (when sumoylated) with GPS2; interaction with GPS2 onto hepatic acute phase protein promoters prevents N-Cor corepressor complex dissociation. Interacts with ABCA12 and ABCA1; this interaction is required for ABCA1 localization to the cell surface and is necessary for its normal activity and stability. Post-translationally, sumoylated by SUMO2 at Lys-395 and Lys-433 during the hepatic acute phase response, leading to promote interaction with GPS2 and prevent N-Cor corepressor complex dissociation. As to expression, ubiquitous.

Its subcellular location is the nucleus. Functionally, nuclear receptor that exhibits a ligand-dependent transcriptional activation activity. Binds preferentially to double-stranded oligonucleotide direct repeats having the consensus half-site sequence 5'-AGGTCA-3' and 4-nt spacing (DR-4). Regulates cholesterol uptake through MYLIP-dependent ubiquitination of LDLR, VLDLR and LRP8; DLDLR and LRP8. Interplays functionally with RORA for the regulation of genes involved in liver metabolism. Induces LPCAT3-dependent phospholipid remodeling in endoplasmic reticulum (ER) membranes of hepatocytes, driving SREBF1 processing and lipogenesis. Via LPCAT3, triggers the incorporation of arachidonate into phosphatidylcholines of ER membranes, increasing membrane dynamics and enabling triacylglycerols transfer to nascent very low-density lipoprotein (VLDL) particles. Via LPCAT3 also counteracts lipid-induced ER stress response and inflammation, likely by modulating SRC kinase membrane compartmentalization and limiting the synthesis of lipid inflammatory mediators. Plays an anti-inflammatory role during the hepatic acute phase response by acting as a corepressor: inhibits the hepatic acute phase response by preventing dissociation of the N-Cor corepressor complex. The protein is Oxysterols receptor LXR-beta (Nr1h2) of Mus musculus (Mouse).